An 82-amino-acid polypeptide reads, in one-letter code: ATP synthase subunit c (82 aa).

The next 2 membrane-spanning stretches (helical) occupy residues Ala-6–Ile-26 and Leu-57–Ala-77.

This sequence belongs to the ATPase C chain family. F-type ATPases have 2 components, F(1) - the catalytic core - and F(0) - the membrane proton channel. F(1) has five subunits: alpha(3), beta(3), gamma(1), delta(1), epsilon(1). F(0) has four main subunits: a(1), b(1), b'(1) and c(10-14). The alpha and beta chains form an alternating ring which encloses part of the gamma chain. F(1) is attached to F(0) by a central stalk formed by the gamma and epsilon chains, while a peripheral stalk is formed by the delta, b and b' chains.

The protein localises to the cell inner membrane. Functionally, f(1)F(0) ATP synthase produces ATP from ADP in the presence of a proton or sodium gradient. F-type ATPases consist of two structural domains, F(1) containing the extramembraneous catalytic core and F(0) containing the membrane proton channel, linked together by a central stalk and a peripheral stalk. During catalysis, ATP synthesis in the catalytic domain of F(1) is coupled via a rotary mechanism of the central stalk subunits to proton translocation. Its function is as follows. Key component of the F(0) channel; it plays a direct role in translocation across the membrane. A homomeric c-ring of between 10-14 subunits forms the central stalk rotor element with the F(1) delta and epsilon subunits. The polypeptide is ATP synthase subunit c (Gloeobacter violaceus (strain ATCC 29082 / PCC 7421)).